The chain runs to 229 residues: Ribosome maturation factor RimM (229 aa).

Residues 148-229 (ADEFYWVDLI…RVVVDWEADY (82 aa)) form the PRC barrel domain.

It belongs to the RimM family. Binds ribosomal protein uS19.

It localises to the cytoplasm. Its function is as follows. An accessory protein needed during the final step in the assembly of 30S ribosomal subunit, possibly for assembly of the head region. Essential for efficient processing of 16S rRNA. May be needed both before and after RbfA during the maturation of 16S rRNA. It has affinity for free ribosomal 30S subunits but not for 70S ribosomes. The chain is Ribosome maturation factor RimM from Burkholderia pseudomallei (strain 1710b).